We begin with the raw amino-acid sequence, 47 residues long: uncharacterized protein (47 aa).

The interval 22 to 47 (VGPRTKRANQASPPVGRHSSRLMCPG) is disordered.

This is an uncharacterized protein from Saccharomyces cerevisiae (strain ATCC 204508 / S288c) (Baker's yeast).